A 98-amino-acid chain; its full sequence is ESAT-6-like protein EsxK (98 aa).

The protein belongs to the WXG100 family. CFP-10 subfamily. In terms of assembly, strongly interacts with EsxL to form a heterodimeric complex under reducing conditions.

It localises to the secreted. This chain is ESAT-6-like protein EsxK, found in Mycobacterium tuberculosis (strain CDC 1551 / Oshkosh).